We begin with the raw amino-acid sequence, 184 residues long: MITMKDIIKEGHPTLRKVAEPVPLPPSEEDKRILQSLLDYVKMSQDPELAAKYGLRPGIGLAAPQINVSKRMIAVHVTDENGTLYSYALFNPKIVSHSVQQCYLTTGEGCLSVDRDVPGYVLRYARITVTGTTLDGEEVTLRLKGLPAIVFQHEIDHLNGIMFYDRINPADPFQVPDGAIPIGR.

Residues Cys110 and His153 each contribute to the Fe cation site. The active site involves Glu154. His157 lines the Fe cation pocket.

This sequence belongs to the polypeptide deformylase family. Fe(2+) serves as cofactor.

It carries out the reaction N-terminal N-formyl-L-methionyl-[peptide] + H2O = N-terminal L-methionyl-[peptide] + formate. In terms of biological role, removes the formyl group from the N-terminal Met of newly synthesized proteins. Requires at least a dipeptide for an efficient rate of reaction. N-terminal L-methionine is a prerequisite for activity but the enzyme has broad specificity at other positions. This Geobacillus stearothermophilus (Bacillus stearothermophilus) protein is Peptide deformylase 2.